The chain runs to 393 residues: Sugar efflux transporter B (393 aa).

12 helical membrane-spanning segments follow: residues 13 to 33 (FDLTSTAFLIVAFLTGIAGAL), 52 to 72 (MVGFFFTGSAVIGIIVSQFLA), 84 to 101 (LIVFCCVLGMLACVLFAW), 105 to 124 (YFILLFIGVFLSSFGSTANP), 152 to 172 (VSLAWVIGPPLAYALAMGFSF), 174 to 194 (VMYLSAAVAFIVCGVMVWFFL), 219 to 239 (LLLFVICTLMWGTNSLYIINM), 253 to 273 (LAGVMMGTAAGLEIPTMLIAG), 283 to 303 (LLMCIAVVAGLCFYVGMLLAH), 308 to 328 (LLGLQLLNAIYIGILGGIGML), 344 to 364 (LYTNTIRVGWIIAGSLAGIAA), and 366 to 386 (IWNYHAVFWFALVMIVATMFC).

This sequence belongs to the major facilitator superfamily. Set transporter family.

Its subcellular location is the cell inner membrane. Functionally, involved in the efflux of sugars. The physiological role may be the detoxification of non-metabolizable sugar analogs. Can transport lactose and glucose. The protein is Sugar efflux transporter B (setB) of Salmonella typhimurium (strain LT2 / SGSC1412 / ATCC 700720).